Here is a 122-residue protein sequence, read N- to C-terminus: Large ribosomal subunit protein uL14c (122 aa).

This sequence belongs to the universal ribosomal protein uL14 family. In terms of assembly, part of the 50S ribosomal subunit.

It is found in the plastid. It localises to the chloroplast. Its function is as follows. Binds to 23S rRNA. In Nicotiana sylvestris (Wood tobacco), this protein is Large ribosomal subunit protein uL14c.